The chain runs to 322 residues: ADP,ATP carrier protein (322 aa).

Solcar repeat units follow at residues 25–118 (STFF…FKKM), 130–222 (KWFA…LKPV), and 230–316 (GNFL…VQLL). A run of 5 helical transmembrane segments spans residues 27 to 54 (FFFD…VKLL), 95 to 119 (TANV…KKMF), 128 to 148 (YAKW…ASLL), 198 to 219 (FGPS…YDTL), and 233 to 253 (LASF…SYPL). Residues R100 and K112 each coordinate ADP. R257 provides a ligand contact to ADP. The important for transport activity stretch occupies residues 257–262 (RRRMMM). The Nucleotide carrier signature motif signature appears at 257 to 262 (RRRMMM). The chain crosses the membrane as a helical span at residues 293-313 (AGANILRGVAGAGVLSIYDQV).

This sequence belongs to the mitochondrial carrier (TC 2.A.29) family. Monomer.

It is found in the mitochondrion inner membrane. It catalyses the reaction ADP(in) + ATP(out) = ADP(out) + ATP(in). With respect to regulation, the matrix-open state (m-state) is inhibited by the membrane-permeable bongkrekic acid (BKA). The cytoplasmic-open state (c-state) is inhibited by the membrane-impermeable toxic inhibitor carboxyatractyloside (CATR). ADP:ATP antiporter that mediates import of ADP into the mitochondrial matrix for ATP synthesis, and export of ATP out to fuel the cell. Cycles between the cytoplasmic-open state (c-state) and the matrix-open state (m-state): operates by the alternating access mechanism with a single substrate-binding site intermittently exposed to either the cytosolic (c-state) or matrix (m-state) side of the inner mitochondrial membrane. The sequence is that of ADP,ATP carrier protein (anc1) from Schizosaccharomyces pombe (strain 972 / ATCC 24843) (Fission yeast).